Reading from the N-terminus, the 102-residue chain is MYAVIKTGGKQYKVAEGDFLKVEKLDNIVGDTIEFGEVLMIGGDAVKVGAPLVAGASVTAKVAVQGRDKKILVFKSKRRKNSRKLIGHRQYHTVLKIEKISA.

Belongs to the bacterial ribosomal protein bL21 family. Part of the 50S ribosomal subunit. Contacts protein L20.

In terms of biological role, this protein binds to 23S rRNA in the presence of protein L20. This is Large ribosomal subunit protein bL21 from Trichlorobacter lovleyi (strain ATCC BAA-1151 / DSM 17278 / SZ) (Geobacter lovleyi).